A 203-amino-acid polypeptide reads, in one-letter code: Glycerol-3-phosphate acyltransferase (203 aa).

Transmembrane regions (helical) follow at residues 1 to 21 (MIQT…LGAI), 84 to 104 (WLQV…VWLG), 117 to 137 (IFLG…MAVI), and 157 to 179 (LMLL…LMVL).

This sequence belongs to the PlsY family. In terms of assembly, probably interacts with PlsX.

It is found in the cell inner membrane. It catalyses the reaction an acyl phosphate + sn-glycerol 3-phosphate = a 1-acyl-sn-glycero-3-phosphate + phosphate. It participates in lipid metabolism; phospholipid metabolism. In terms of biological role, catalyzes the transfer of an acyl group from acyl-phosphate (acyl-PO(4)) to glycerol-3-phosphate (G3P) to form lysophosphatidic acid (LPA). This enzyme utilizes acyl-phosphate as fatty acyl donor, but not acyl-CoA or acyl-ACP. This is Glycerol-3-phosphate acyltransferase from Synechococcus sp. (strain CC9605).